Reading from the N-terminus, the 345-residue chain is Sesquiterpene synthase GALMADRAFT_104215 (345 aa).

Mg(2+) is bound by residues D91, N226, S230, and E234. The DDXXD motif signature appears at 91–95 (DEFTD). The (2E,6E)-farnesyl diphosphate site is built by R316 and Y317.

It belongs to the terpene synthase family. Mg(2+) serves as cofactor.

It catalyses the reaction (2E,6E)-farnesyl diphosphate = beta-gurjunene + diphosphate. Terpene cyclase that catalyzes the cyclization of farnesyl diphosphate (FPP) to beta-gurjunene. The protein is Sesquiterpene synthase GALMADRAFT_104215 of Galerina marginata (strain CBS 339.88).